The primary structure comprises 224 residues: Large ribosomal subunit protein uL1 (224 aa).

This sequence belongs to the universal ribosomal protein uL1 family. As to quaternary structure, part of the 50S ribosomal subunit.

Binds directly to 23S rRNA. The L1 stalk is quite mobile in the ribosome, and is involved in E site tRNA release. Functionally, protein L1 is also a translational repressor protein, it controls the translation of the L11 operon by binding to its mRNA. In Borrelia duttonii (strain Ly), this protein is Large ribosomal subunit protein uL1.